The chain runs to 225 residues: Cytidylate kinase (225 aa).

12–20 (GPSGAGKGT) is a binding site for ATP.

This sequence belongs to the cytidylate kinase family. Type 1 subfamily.

Its subcellular location is the cytoplasm. It catalyses the reaction CMP + ATP = CDP + ADP. The enzyme catalyses dCMP + ATP = dCDP + ADP. This Stenotrophomonas maltophilia (strain K279a) protein is Cytidylate kinase.